Consider the following 128-residue polypeptide: Large ribosomal subunit protein uL22 (128 aa).

Belongs to the universal ribosomal protein uL22 family. In terms of assembly, part of the 50S ribosomal subunit.

This protein binds specifically to 23S rRNA; its binding is stimulated by other ribosomal proteins, e.g. L4, L17, and L20. It is important during the early stages of 50S assembly. It makes multiple contacts with different domains of the 23S rRNA in the assembled 50S subunit and ribosome. Functionally, the globular domain of the protein is located near the polypeptide exit tunnel on the outside of the subunit, while an extended beta-hairpin is found that lines the wall of the exit tunnel in the center of the 70S ribosome. This Prochlorococcus marinus (strain MIT 9312) protein is Large ribosomal subunit protein uL22.